Reading from the N-terminus, the 333-residue chain is Glycerol-3-phosphate dehydrogenase [NAD(P)+] (333 aa).

Positions 10, 11, 31, 32, and 105 each coordinate NADPH. Lys105, Gly136, and Ser138 together coordinate sn-glycerol 3-phosphate. Ala140 is a binding site for NADPH. Sn-glycerol 3-phosphate is bound by residues Lys191, Asp244, Ser254, Arg255, and Asn256. Lys191 serves as the catalytic Proton acceptor. Arg255 contributes to the NADPH binding site. NADPH is bound by residues Ile279 and Glu281.

It belongs to the NAD-dependent glycerol-3-phosphate dehydrogenase family.

The protein localises to the cytoplasm. The enzyme catalyses sn-glycerol 3-phosphate + NAD(+) = dihydroxyacetone phosphate + NADH + H(+). It carries out the reaction sn-glycerol 3-phosphate + NADP(+) = dihydroxyacetone phosphate + NADPH + H(+). It participates in membrane lipid metabolism; glycerophospholipid metabolism. In terms of biological role, catalyzes the reduction of the glycolytic intermediate dihydroxyacetone phosphate (DHAP) to sn-glycerol 3-phosphate (G3P), the key precursor for phospholipid synthesis. This is Glycerol-3-phosphate dehydrogenase [NAD(P)+] from Chlorobium chlorochromatii (strain CaD3).